The primary structure comprises 136 residues: Large ribosomal subunit protein uL16 (136 aa).

This sequence belongs to the universal ribosomal protein uL16 family. Part of the 50S ribosomal subunit.

Binds 23S rRNA and is also seen to make contacts with the A and possibly P site tRNAs. This is Large ribosomal subunit protein uL16 from Psychromonas ingrahamii (strain DSM 17664 / CCUG 51855 / 37).